The chain runs to 316 residues: Ribonuclease Z (316 aa).

Residues His-61, His-63, Asp-65, His-66, His-152, Asp-220, and His-279 each contribute to the Zn(2+) site. Asp-65 functions as the Proton acceptor in the catalytic mechanism.

The protein belongs to the RNase Z family. As to quaternary structure, homodimer. The cofactor is Zn(2+).

It carries out the reaction Endonucleolytic cleavage of RNA, removing extra 3' nucleotides from tRNA precursor, generating 3' termini of tRNAs. A 3'-hydroxy group is left at the tRNA terminus and a 5'-phosphoryl group is left at the trailer molecule.. Functionally, zinc phosphodiesterase, which displays some tRNA 3'-processing endonuclease activity. Probably involved in tRNA maturation, by removing a 3'-trailer from precursor tRNA. This chain is Ribonuclease Z, found in Clostridium perfringens (strain ATCC 13124 / DSM 756 / JCM 1290 / NCIMB 6125 / NCTC 8237 / Type A).